The chain runs to 410 residues: Mating-type locus allele B6 protein (410 aa).

Residues 1 to 110 (MSRDPKLSLS…VNVASPAVEY (110 aa)) form a variable domain between B alleles region. Positions 107 to 184 (AVEYRNLSED…NARRRSGWSH (78 aa)) form a DNA-binding region, homeobox; TALE-type. Residues 111–410 (RNLSEDLPAY…PFFCLSIAFV (300 aa)) form a highly conserved between B alleles region. 3 disordered regions span residues 202-224 (RAKLSSSNQSTPPSLTSEKPSDD), 278-335 (TPKP…TPEL), and 373-393 (KARGNRKVKALPKRAGKQQPD). Polar residues predominate over residues 205 to 219 (LSSSNQSTPPSLTSE). Residues 276–308 (KKTPKPGMPRPVTTVAKRQPARKTKPAAKPKSR) carry the Nuclear localization signal motif. Positions 294–307 (QPARKTKPAAKPKS) are enriched in basic residues. A compositionally biased stretch (polar residues) spans 312–335 (PRASTTPSIDSTLDSSKLESTPEL). The not essential for B6 function stretch occupies residues 333–410 (PELSMCSTAD…PFFCLSIAFV (78 aa)). Over residues 375 to 388 (RGNRKVKALPKRAG) the composition is skewed to basic residues.

The protein belongs to the TALE/M-ATYP homeobox family.

The protein resides in the nucleus. The B locus has at least 25 alleles, and any combination of two different B alleles yields a multimeric regulatory protein, that activates genes responsible for the pathogenicity and for the sexual development of the fungus within the corn plant. This Mycosarcoma maydis (Corn smut fungus) protein is Mating-type locus allele B6 protein.